Here is a 459-residue protein sequence, read N- to C-terminus: UDP-N-acetylmuramoylalanine--D-glutamate ligase (459 aa).

118–124 (GTNGKTT) contacts ATP.

The protein belongs to the MurCDEF family.

The protein resides in the cytoplasm. The catalysed reaction is UDP-N-acetyl-alpha-D-muramoyl-L-alanine + D-glutamate + ATP = UDP-N-acetyl-alpha-D-muramoyl-L-alanyl-D-glutamate + ADP + phosphate + H(+). Its pathway is cell wall biogenesis; peptidoglycan biosynthesis. Its function is as follows. Cell wall formation. Catalyzes the addition of glutamate to the nucleotide precursor UDP-N-acetylmuramoyl-L-alanine (UMA). This is UDP-N-acetylmuramoylalanine--D-glutamate ligase from Desulfosudis oleivorans (strain DSM 6200 / JCM 39069 / Hxd3) (Desulfococcus oleovorans).